Here is a 1089-residue protein sequence, read N- to C-terminus: Platelet-derived growth factor receptor alpha (1089 aa).

The first 23 residues, 1–23 (MGTSHPAFLVLGCLLTGLSLILC), serve as a signal peptide directing secretion. 5 Ig-like C2-type domains span residues 24–113 (QLSL…NELE), 117–201 (IYIY…FQTI), 202–306 (PFNV…KKVT), 319–410 (PTFS…FELL), and 414–517 (PSSI…LKLV). Residues 24-528 (QLSLPSILPN…PTLRSELTVA (505 aa)) are Extracellular-facing. Asn42, Asn76, Asn103, and Asn179 each carry an N-linked (GlcNAc...) asparagine glycan. Cysteines 49 and 100 form a disulfide. Cystine bridges form between Cys150–Cys189 and Cys235–Cys290. 4 N-linked (GlcNAc...) asparagine glycosylation sites follow: Asn353, Asn359, Asn458, and Asn468. An intrachain disulfide couples Cys435 to Cys501. A helical membrane pass occupies residues 529 to 549 (AAVLVLLVIVIISLIVLVVIW). Residues 550-1089 (KQKPRYEIRW…SSDLVEDSFL (540 aa)) lie on the Cytoplasmic side of the membrane. Phosphotyrosine; by autocatalysis occurs at positions 572 and 574. In terms of domain architecture, Protein kinase spans 593 to 954 (LVLGRVLGSG…HLSEIVENLL (362 aa)). ATP contacts are provided by residues 599 to 607 (LGSGAFGKV) and Lys627. 6 positions are modified to phosphotyrosine; by autocatalysis: Tyr720, Tyr731, Tyr742, Tyr754, Tyr762, and Tyr768. The active-site Proton acceptor is the Asp818. A phosphotyrosine; by autocatalysis mark is found at Tyr849, Tyr988, and Tyr1018. The tract at residues 1018–1089 (YIIPLPDIDP…SSDLVEDSFL (72 aa)) is disordered. Residues 1041–1059 (SSQTSEESAIETGSSSSTF) are compositionally biased toward polar residues. A compositionally biased stretch (acidic residues) spans 1065 to 1089 (ETIEDIDMMDDIGIDSSDLVEDSFL).

Belongs to the protein kinase superfamily. Tyr protein kinase family. CSF-1/PDGF receptor subfamily. As to quaternary structure, interacts with homodimeric PDGFA, PDGFB and PDGFC, and with heterodimers formed by PDGFA and PDGFB. Monomer in the absence of bound ligand. Interaction with dimeric PDGFA, PDGFB and/or PDGFC leads to receptor dimerization, where both PDGFRA homodimers and heterodimers with PDGFRB are observed. Interacts (tyrosine phosphorylated) with SHB (via SH2 domain). Interacts (tyrosine phosphorylated) with SHF (via SH2 domain). Interacts (tyrosine phosphorylated) with SRC (via SH2 domain). Interacts (tyrosine phosphorylated) with PIK3R1. Interacts (tyrosine phosphorylated) with PLCG1 (via SH2 domain). Interacts (tyrosine phosphorylated) with CRK, GRB2 and GRB7. Interacts with CD248; this interaction promotes PDGF receptor signaling pathway. (Microbial infection) Interacts with human cytomegalovirus/HHV-5 envelope glycoprotein B/gB. Also interacts with the trimeric complex gH-gL-gO. Trimer-PDGFRA interaction has an inhibitory effect on PDGFRA signaling. Post-translationally, N-glycosylated. In terms of processing, ubiquitinated, leading to its internalization and degradation. Autophosphorylated on tyrosine residues upon ligand binding. Autophosphorylation occurs in trans, i.e. one subunit of the dimeric receptor phosphorylates tyrosine residues on the other subunit. Phosphorylation at Tyr-731 and Tyr-742 is important for interaction with PIK3R1. Phosphorylation at Tyr-720 and Tyr-754 is important for interaction with PTPN11. Phosphorylation at Tyr-762 is important for interaction with CRK. Phosphorylation at Tyr-572 and Tyr-574 is important for interaction with SRC and SRC family members. Phosphorylation at Tyr-988 and Tyr-1018 is important for interaction with PLCG1. As to expression, detected in platelets (at protein level). Widely expressed. Detected in brain, fibroblasts, smooth muscle, heart, and embryo. Expressed in primary and metastatic colon tumors and in normal colon tissue.

The protein resides in the cell membrane. The protein localises to the cell projection. It localises to the cilium. It is found in the golgi apparatus. The enzyme catalyses L-tyrosyl-[protein] + ATP = O-phospho-L-tyrosyl-[protein] + ADP + H(+). Present in an inactive conformation in the absence of bound ligand. Binding of PDGFA and/or PDGFB leads to dimerization and activation by autophosphorylation on tyrosine residues. Inhibited by imatinib, nilotinib and sorafenib. In terms of biological role, tyrosine-protein kinase that acts as a cell-surface receptor for PDGFA, PDGFB and PDGFC and plays an essential role in the regulation of embryonic development, cell proliferation, survival and chemotaxis. Depending on the context, promotes or inhibits cell proliferation and cell migration. Plays an important role in the differentiation of bone marrow-derived mesenchymal stem cells. Required for normal skeleton development and cephalic closure during embryonic development. Required for normal development of the mucosa lining the gastrointestinal tract, and for recruitment of mesenchymal cells and normal development of intestinal villi. Plays a role in cell migration and chemotaxis in wound healing. Plays a role in platelet activation, secretion of agonists from platelet granules, and in thrombin-induced platelet aggregation. Binding of its cognate ligands - homodimeric PDGFA, homodimeric PDGFB, heterodimers formed by PDGFA and PDGFB or homodimeric PDGFC -leads to the activation of several signaling cascades; the response depends on the nature of the bound ligand and is modulated by the formation of heterodimers between PDGFRA and PDGFRB. Phosphorylates PIK3R1, PLCG1, and PTPN11. Activation of PLCG1 leads to the production of the cellular signaling molecules diacylglycerol and inositol 1,4,5-trisphosphate, mobilization of cytosolic Ca(2+) and the activation of protein kinase C. Phosphorylates PIK3R1, the regulatory subunit of phosphatidylinositol 3-kinase, and thereby mediates activation of the AKT1 signaling pathway. Mediates activation of HRAS and of the MAP kinases MAPK1/ERK2 and/or MAPK3/ERK1. Promotes activation of STAT family members STAT1, STAT3 and STAT5A and/or STAT5B. Receptor signaling is down-regulated by protein phosphatases that dephosphorylate the receptor and its down-stream effectors, and by rapid internalization of the activated receptor. In Homo sapiens (Human), this protein is Platelet-derived growth factor receptor alpha (PDGFRA).